Consider the following 460-residue polypeptide: V-type ATP synthase beta chain (460 aa).

This sequence belongs to the ATPase alpha/beta chains family.

Produces ATP from ADP in the presence of a proton gradient across the membrane. The V-type beta chain is a regulatory subunit. The protein is V-type ATP synthase beta chain of Clostridium novyi (strain NT).